A 1976-amino-acid polypeptide reads, in one-letter code: DNA-directed RNA polymerase V subunit 1 (1976 aa).

C57, C60, C68, H71, C98, and C101 together coordinate Zn(2+). Mg(2+) contacts are provided by D449, D451, and D453. The bridging helix stretch occupies residues 751 to 763; the sequence is PYEEMAHSIAARE. Residues 1215 to 1216 form repeat 1; that stretch reads WG. Residues 1215-1693 form an 18 X 2 AA repeats of [WG]-[GW] repeats region; it reads WGKRVDVGTG…AKKFPSSGGW (479 aa). 3 disordered regions span residues 1272–1291, 1298–1718, and 1847–1976; these read EEEM…LGEP, DFQN…EDNL, and FTKP…QTQT. 2 stretches are compositionally biased toward basic and acidic residues: residues 1281–1291 and 1298–1307; these read SPERDSALGEP and DFQNLHDEGK. Repeat unit 2 spans residues 1329-1330; it reads WG. The span at 1332–1348 shows a compositional bias: polar residues; it reads SKSTGGEANPESNWEKT. Residues 1349 to 1371 are compositionally biased toward basic and acidic residues; sequence TNVEKEDAWSSWNTRKDAQESSK. Repeat copies occupy residues 1378-1379, 1415-1416, 1430-1431, 1439-1440, 1447-1448, 1464-1465, 1498-1499, 1528-1529, 1545-1546, 1562-1563, 1596-1597, 1604-1605, 1621-1622, 1638-1639, and 1641-1642. Residues 1415–1430 show a composition bias toward basic and acidic residues; that stretch reads WGHKSVSDKSWDKKNW. Residues 1491–1501 are compositionally biased toward polar residues; the sequence is TESNGATWGSS. The span at 1648–1678 shows a compositional bias: basic and acidic residues; that stretch reads AEDKDTNEDDRNPWVSLKETKSREKDDKERS. A run of 2 repeats spans residues 1680–1681 and 1692–1693. Residues 1869 to 1878 are compositionally biased toward polar residues; the sequence is EQSQPPNQSI. A compositionally biased stretch (low complexity) spans 1886–1976; it reads QTQTQSQSPS…SSQSPSQTQT (91 aa).

This sequence belongs to the RNA polymerase beta' chain family. In terms of assembly, component of the RNA polymerase V complex. Interacts with NRPD4, NRPD2A, and (via C-terminus) with AGO4. Interacts with SUVH2. In terms of tissue distribution, mostly expressed in flowers, and, to a lower extent, in leaves. Present in sperm cells.

It localises to the nucleus. It is found in the nucleolus. The enzyme catalyses RNA(n) + a ribonucleoside 5'-triphosphate = RNA(n+1) + diphosphate. Functionally, DNA-dependent RNA polymerase catalyzes the transcription of DNA into RNA using the four ribonucleoside triphosphates as substrates. Largest and catalytic component of RNA polymerase V involved in RNA-directed DNA methylation-dependent (RdDM) silencing of endogenous repeated sequences, including transposable elements. Also required for full erasure of methylation when the RNA trigger is withdrawn. Seems also involved in the synthesis of short-interfering RNAs (siRNA). Essential component of a self-reinforcing loop coupling de novo DNA methylation to siRNA production. Involved in the maintenance of post-transcriptional RNA silencing. The protein is DNA-directed RNA polymerase V subunit 1 (NRPE1) of Arabidopsis thaliana (Mouse-ear cress).